The following is a 308-amino-acid chain: Nodulation protein D 1 (308 aa).

Residues 6–63 (LDLNLLVALDALMTERKLTAAARRINLSQPAMSAAIARLRTYFGDELFSMQGRELIPT) form the HTH lysR-type domain. Residues 23-42 (LTAAARRINLSQPAMSAAIA) constitute a DNA-binding region (H-T-H motif).

This sequence belongs to the LysR transcriptional regulatory family.

Its function is as follows. NodD regulates the expression of the nodABCFE genes which encode other nodulation proteins. NodD is also a negative regulator of its own expression. Binds flavonoids as inducers. The chain is Nodulation protein D 1 (nodD1) from Rhizobium meliloti (strain 1021) (Ensifer meliloti).